A 291-amino-acid chain; its full sequence is uncharacterized protein (291 aa).

2 helical membrane passes run 42–62 (IFFF…RALW) and 86–106 (TIFP…LALD).

The protein belongs to the cytochrome c oxidase subunit 2 family.

The protein resides in the mitochondrion membrane. This is an uncharacterized protein from Arabidopsis thaliana (Mouse-ear cress).